We begin with the raw amino-acid sequence, 125 residues long: Holo-[acyl-carrier-protein] synthase (125 aa).

The Mg(2+) site is built by Asp-8 and Glu-57.

The protein belongs to the P-Pant transferase superfamily. AcpS family. The cofactor is Mg(2+).

Its subcellular location is the cytoplasm. The enzyme catalyses apo-[ACP] + CoA = holo-[ACP] + adenosine 3',5'-bisphosphate + H(+). In terms of biological role, transfers the 4'-phosphopantetheine moiety from coenzyme A to a Ser of acyl-carrier-protein. This is Holo-[acyl-carrier-protein] synthase from Nitrosospira multiformis (strain ATCC 25196 / NCIMB 11849 / C 71).